Reading from the N-terminus, the 376-residue chain is UDP-4-amino-4,6-dideoxy-N-acetyl-beta-L-altrosamine transaminase (376 aa).

Substrate is bound by residues Y4, 24–27, A54, and S176; that span reads EILT. Position 181 is an N6-(pyridoxal phosphate)lysine (K181). Substrate-binding positions include N226 and 311–314; that span reads QVHY.

This sequence belongs to the DegT/DnrJ/EryC1 family.

The enzyme catalyses UDP-4-amino-4,6-dideoxy-N-acetyl-beta-L-altrosamine + 2-oxoglutarate = UDP-2-acetamido-2,6-dideoxy-beta-L-arabino-hex-4-ulose + L-glutamate. Functionally, catalyzes the second step in the biosynthesis of pseudaminic acid, a sialic-acid-like sugar that is used to modify flagellin. Uses UDP-2-acetamido-2,6-dideoxy-beta-L-arabino-4-hexulose as substrate producing UDP-4-amino-4,6-dideoxy-beta-L-AltNAc. The polypeptide is UDP-4-amino-4,6-dideoxy-N-acetyl-beta-L-altrosamine transaminase (pseC) (Campylobacter jejuni subsp. jejuni serotype O:23/36 (strain 81-176)).